The following is a 287-amino-acid chain: MEMO1 family protein MJ0403 (287 aa).

This sequence belongs to the MEMO1 family.

In Methanocaldococcus jannaschii (strain ATCC 43067 / DSM 2661 / JAL-1 / JCM 10045 / NBRC 100440) (Methanococcus jannaschii), this protein is MEMO1 family protein MJ0403.